The following is a 513-amino-acid chain: ATP synthase subunit alpha (513 aa).

169 to 176 serves as a coordination point for ATP; the sequence is GDRQTGKT.

It belongs to the ATPase alpha/beta chains family. In terms of assembly, F-type ATPases have 2 components, CF(1) - the catalytic core - and CF(0) - the membrane proton channel. CF(1) has five subunits: alpha(3), beta(3), gamma(1), delta(1), epsilon(1). CF(0) has three main subunits: a(1), b(2) and c(9-12). The alpha and beta chains form an alternating ring which encloses part of the gamma chain. CF(1) is attached to CF(0) by a central stalk formed by the gamma and epsilon chains, while a peripheral stalk is formed by the delta and b chains.

It localises to the cell inner membrane. It carries out the reaction ATP + H2O + 4 H(+)(in) = ADP + phosphate + 5 H(+)(out). Produces ATP from ADP in the presence of a proton gradient across the membrane. The alpha chain is a regulatory subunit. The protein is ATP synthase subunit alpha of Pseudoalteromonas translucida (strain TAC 125).